Consider the following 275-residue polypeptide: 3-methyl-2-oxobutanoate hydroxymethyltransferase (275 aa).

Residues aspartate 51 and aspartate 90 each coordinate Mg(2+). 3-methyl-2-oxobutanoate is bound by residues 51–52, aspartate 90, and lysine 120; that span reads DS. Glutamate 122 provides a ligand contact to Mg(2+). The active-site Proton acceptor is the glutamate 189.

It belongs to the PanB family. Homodecamer; pentamer of dimers. Requires Mg(2+) as cofactor.

The protein localises to the cytoplasm. It carries out the reaction 3-methyl-2-oxobutanoate + (6R)-5,10-methylene-5,6,7,8-tetrahydrofolate + H2O = 2-dehydropantoate + (6S)-5,6,7,8-tetrahydrofolate. It participates in cofactor biosynthesis; (R)-pantothenate biosynthesis; (R)-pantoate from 3-methyl-2-oxobutanoate: step 1/2. Catalyzes the reversible reaction in which hydroxymethyl group from 5,10-methylenetetrahydrofolate is transferred onto alpha-ketoisovalerate to form ketopantoate. The polypeptide is 3-methyl-2-oxobutanoate hydroxymethyltransferase (Phenylobacterium zucineum (strain HLK1)).